Here is a 409-residue protein sequence, read N- to C-terminus: Astacin-like metalloendopeptidase (409 aa).

The signal sequence occupies residues 1-19 (MDLKMLLIFIAFLLPSVLG). Low complexity predominate over residues 30 to 39 (TATTESTQVT). The interval 30–54 (TATTESTQVTTEEDIYDSPSPAETD) is disordered. One can recognise a Peptidase M12A domain in the interval 87 to 285 (SAINCRNCYW…AKINRLYNCS (199 aa)). Intrachain disulfides connect C91/C94, C134/C284, C155/C175, C287/C313, and C339/C362. H183 is a binding site for Zn(2+). E184 is a catalytic residue. Zn(2+) contacts are provided by H187 and H193. The region spanning 287-399 (CSTIIDAAFG…SGFQATFTSA (113 aa)) is the CUB domain.

Requires Zn(2+) as cofactor. As to expression, expressed in ovary and gonads.

It localises to the cytoplasm. The protein localises to the cell membrane. The protein resides in the cytoplasmic vesicle. Its subcellular location is the secretory vesicle. It is found in the cortical granule. In terms of biological role, probable oocyte-specific oolemmal receptor involved in sperm and egg adhesion and fertilization. May act as a protease. The polypeptide is Astacin-like metalloendopeptidase (ASTL) (Gallus gallus (Chicken)).